Reading from the N-terminus, the 254-residue chain is Ciliary microtubule associated protein 1A (254 aa).

STPGR repeat units follow at residues 180 to 205 (PGPAAYRQTDVQVTKFKAPQYTMAAR) and 216 to 241 (PGPGAHSPEKVTMTRPCAPVVSFGIK). The tract at residues 207-226 (EPPGDKTLKPGPGAHSPEKV) is disordered.

The protein belongs to the CIMAP family. Microtubule inner protein component of sperm flagellar doublet microtubules.

The protein localises to the cytoplasm. It localises to the cytoskeleton. The protein resides in the flagellum axoneme. Its function is as follows. Outer dense fibers are filamentous structures located on the outside of the axoneme in the midpiece and principal piece of the mammalian sperm tail. May help to maintain the passive elastic structures and elastic recoil of the sperm tail. The polypeptide is Ciliary microtubule associated protein 1A (CIMAP1A) (Bos taurus (Bovine)).